We begin with the raw amino-acid sequence, 89 residues long: Small ribosomal subunit protein uS14 (89 aa).

Belongs to the universal ribosomal protein uS14 family. Part of the 30S ribosomal subunit. Contacts proteins S3 and S10.

Binds 16S rRNA, required for the assembly of 30S particles and may also be responsible for determining the conformation of the 16S rRNA at the A site. This is Small ribosomal subunit protein uS14 from Onion yellows phytoplasma (strain OY-M).